The following is a 347-amino-acid chain: Transcription termination/antitermination protein NusA (347 aa).

An S1 motif domain is found at 112–184 (GEIVAGVIQR…REPLITLSRT (73 aa)). Residues 287 to 347 (ARAARVVVPD…GVSRGMAHDR (61 aa)) enclose the KH domain. Positions 322–347 (DIRGDAPPPPPGQPEPGVSRGMAHDR) are disordered.

The protein belongs to the NusA family. Monomer. Binds directly to the core enzyme of the DNA-dependent RNA polymerase and to nascent RNA.

It localises to the cytoplasm. Participates in both transcription termination and antitermination. In Mycobacterium bovis (strain ATCC BAA-935 / AF2122/97), this protein is Transcription termination/antitermination protein NusA.